The chain runs to 277 residues: Caspase-3 (277 aa).

Position 1 is an N-acetylmethionine (M1). 2 propeptides span residues 1 to 9 (MENNKTSVD) and 10 to 28 (SKSI…KSVD). K11 carries the N6-acetyllysine modification. At S26 the chain carries Phosphoserine. Residues H121 and C163 contribute to the active site. An S-nitrosocysteine; in inhibited form modification is found at C163.

Belongs to the peptidase C14A family. In terms of assembly, heterotetramer that consists of two anti-parallel arranged heterodimers, each one formed by a 17 kDa (p17) and a 12 kDa (p12) subunit. Interacts with BIRC6/bruce. Cleavage by granzyme B, caspase-6, caspase-8 and caspase-10 generates the two active subunits. Additional processing of the propeptides is likely due to the autocatalytic activity of the activated protease. Active heterodimers between the small subunit of caspase-7 protease and the large subunit of caspase-3 also occur and vice versa. In terms of processing, S-nitrosylated on its catalytic site cysteine in unstimulated cell lines and denitrosylated upon activation of the Fas apoptotic pathway, associated with an increase in intracellular caspase activity. Fas therefore activates caspase-3 not only by inducing the cleavage of the caspase zymogen to its active subunits, but also by stimulating the denitrosylation of its active site thiol. Post-translationally, ubiquitinated by BIRC6; this activity is inhibited by DIABLO/SMAC. As to expression, highest expression in spleen, lung, liver, kidney and heart. Lower expression in brain, skeletal muscle and testis.

Its subcellular location is the cytoplasm. The enzyme catalyses Strict requirement for an Asp residue at positions P1 and P4. It has a preferred cleavage sequence of Asp-Xaa-Xaa-Asp-|- with a hydrophobic amino-acid residue at P2 and a hydrophilic amino-acid residue at P3, although Val or Ala are also accepted at this position.. Its activity is regulated as follows. Inhibited by BIRC6; following inhibition of BIRC6-caspase binding by DIABLO/SMAC, BIRC6 is subjected to caspase cleavage, leading to an increase in active caspases. In terms of biological role, thiol protease that acts as a major effector caspase involved in the execution phase of apoptosis. Following cleavage and activation by initiator caspases (CASP8, CASP9 and/or CASP10), mediates execution of apoptosis by catalyzing cleavage of many proteins. At the onset of apoptosis, it proteolytically cleaves poly(ADP-ribose) polymerase PARP1 at a '216-Asp-|-Gly-217' bond. Cleaves and activates sterol regulatory element binding proteins (SREBPs) between the basic helix-loop-helix leucine zipper domain and the membrane attachment domain. Cleaves and activates caspase-6, -7 and -9 (CASP6, CASP7 and CASP9, respectively). Cleaves and inactivates interleukin-18 (IL18). Triggers cell adhesion in sympathetic neurons through RET cleavage. Cleaves IL-1 beta between an Asp and an Ala, releasing the mature cytokine which is involved in a variety of inflammatory processes. Cleaves and inhibits serine/threonine-protein kinase AKT1 in response to oxidative stress. Acts as an inhibitor of type I interferon production during virus-induced apoptosis by mediating cleavage of antiviral proteins CGAS, IRF3 and MAVS, thereby preventing cytokine overproduction. Also involved in pyroptosis by mediating cleavage and activation of gasdermin-E (GSDME). Cleaves XRCC4 and phospholipid scramblase proteins XKR4, XKR8 and XKR9, leading to promote phosphatidylserine exposure on apoptotic cell surface. Cleaves BIRC6 following inhibition of BIRC6-caspase binding by DIABLO/SMAC. The sequence is that of Caspase-3 (Casp3) from Mus musculus (Mouse).